Here is a 596-residue protein sequence, read N- to C-terminus: Succinate dehydrogenase flavoprotein subunit (596 aa).

Residues 18-23, 41-56, and D225 contribute to the FAD site; these read GAGGAG and TKLF…AQGG. Tele-8alpha-FAD histidine is present on H49. Substrate-binding residues include H246 and T258. R290 serves as the catalytic Proton acceptor. H357 is a substrate binding site. An FAD-binding site is contributed by E391. R402 lines the substrate pocket. 407 to 408 provides a ligand contact to FAD; it reads SL.

The protein belongs to the FAD-dependent oxidoreductase 2 family. FRD/SDH subfamily. As to quaternary structure, part of an enzyme complex containing four subunits: a flavoprotein, an iron-sulfur, cytochrome b-556, and a hydrophobic anchor protein. It depends on FAD as a cofactor.

It is found in the cell inner membrane. It catalyses the reaction a quinone + succinate = fumarate + a quinol. It functions in the pathway carbohydrate metabolism; tricarboxylic acid cycle; fumarate from succinate (bacterial route): step 1/1. The sequence is that of Succinate dehydrogenase flavoprotein subunit (sdhA) from Rickettsia conorii (strain ATCC VR-613 / Malish 7).